The following is a 628-amino-acid chain: Alpha pinene synthase, chloroplastic (628 aa).

Residues Met1 to Arg46 constitute a chloroplast transit peptide. Mg(2+)-binding residues include Asp381, Asp385, and Glu532. A DDXXD motif motif is present at residues Asp381–Asp385.

The protein belongs to the terpene synthase family. Tpsa subfamily. The cofactor is Mg(2+). Mn(2+) serves as cofactor.

The protein localises to the plastid. The protein resides in the chloroplast. It carries out the reaction (2E)-geranyl diphosphate = alpha-pinene + diphosphate. It participates in secondary metabolite biosynthesis; terpenoid biosynthesis. In terms of biological role, monoterpene synthase involved in the biosynthesis of volatile compounds. Mediates the conversion of (2E)-geranyl diphosphate (GPP) into alpha-pinene. This Chamaecyparis formosensis (Formosan cypress) protein is Alpha pinene synthase, chloroplastic.